We begin with the raw amino-acid sequence, 277 residues long: 3-methyl-2-oxobutanoate hydroxymethyltransferase (277 aa).

The Mg(2+) site is built by aspartate 49 and aspartate 88. 3-methyl-2-oxobutanoate-binding positions include 49 to 50 (DS), aspartate 88, and lysine 118. A Mg(2+)-binding site is contributed by glutamate 120. Glutamate 186 acts as the Proton acceptor in catalysis.

The protein belongs to the PanB family. As to quaternary structure, homodecamer; pentamer of dimers. Requires Mg(2+) as cofactor.

It localises to the cytoplasm. It carries out the reaction 3-methyl-2-oxobutanoate + (6R)-5,10-methylene-5,6,7,8-tetrahydrofolate + H2O = 2-dehydropantoate + (6S)-5,6,7,8-tetrahydrofolate. It functions in the pathway cofactor biosynthesis; (R)-pantothenate biosynthesis; (R)-pantoate from 3-methyl-2-oxobutanoate: step 1/2. Functionally, catalyzes the reversible reaction in which hydroxymethyl group from 5,10-methylenetetrahydrofolate is transferred onto alpha-ketoisovalerate to form ketopantoate. The protein is 3-methyl-2-oxobutanoate hydroxymethyltransferase of Cereibacter sphaeroides (strain ATCC 17029 / ATH 2.4.9) (Rhodobacter sphaeroides).